The primary structure comprises 968 residues: RNA polymerase-associated protein RapA (968 aa).

The Helicase ATP-binding domain maps to 164-334; that stretch reads DVGRRHAPRV…FARLRLLDPN (171 aa). Residue 177–184 participates in ATP binding; sequence DEVGLGKT. The DEAH box motif lies at 280–283; it reads DEAH. In terms of domain architecture, Helicase C-terminal spans 490–685; the sequence is RVEWLMGYLT…ALKAQLEQGR (196 aa).

The protein belongs to the SNF2/RAD54 helicase family. RapA subfamily. In terms of assembly, interacts with the RNAP. Has a higher affinity for the core RNAP than for the holoenzyme. Its ATPase activity is stimulated by binding to RNAP.

In terms of biological role, transcription regulator that activates transcription by stimulating RNA polymerase (RNAP) recycling in case of stress conditions such as supercoiled DNA or high salt concentrations. Probably acts by releasing the RNAP, when it is trapped or immobilized on tightly supercoiled DNA. Does not activate transcription on linear DNA. Probably not involved in DNA repair. This Salmonella choleraesuis (strain SC-B67) protein is RNA polymerase-associated protein RapA.